The sequence spans 263 residues: Acetylglutamate kinase (263 aa).

Substrate is bound by residues 48–49, R70, and N162; that span reads GG.

The protein belongs to the acetylglutamate kinase family. ArgB subfamily.

It is found in the cytoplasm. The enzyme catalyses N-acetyl-L-glutamate + ATP = N-acetyl-L-glutamyl 5-phosphate + ADP. It functions in the pathway amino-acid biosynthesis; L-arginine biosynthesis; N(2)-acetyl-L-ornithine from L-glutamate: step 2/4. In terms of biological role, catalyzes the ATP-dependent phosphorylation of N-acetyl-L-glutamate. This chain is Acetylglutamate kinase, found in Vibrio parahaemolyticus serotype O3:K6 (strain RIMD 2210633).